The primary structure comprises 316 residues: Beta-ketoacyl-[acyl-carrier-protein] synthase III (316 aa).

Residues cysteine 112 and histidine 243 contribute to the active site. Residues 244-248 (QANLR) form an ACP-binding region. The active site involves asparagine 273.

Belongs to the thiolase-like superfamily. FabH family. In terms of assembly, homodimer.

The protein localises to the cytoplasm. It carries out the reaction malonyl-[ACP] + acetyl-CoA + H(+) = 3-oxobutanoyl-[ACP] + CO2 + CoA. It participates in lipid metabolism; fatty acid biosynthesis. Its function is as follows. Catalyzes the condensation reaction of fatty acid synthesis by the addition to an acyl acceptor of two carbons from malonyl-ACP. Catalyzes the first condensation reaction which initiates fatty acid synthesis and may therefore play a role in governing the total rate of fatty acid production. Possesses both acetoacetyl-ACP synthase and acetyl transacylase activities. Its substrate specificity determines the biosynthesis of branched-chain and/or straight-chain of fatty acids. The protein is Beta-ketoacyl-[acyl-carrier-protein] synthase III of Haemophilus influenzae (strain 86-028NP).